The chain runs to 132 residues: Pro-MCH 1 (132 aa).

A signal peptide spans 1 to 24 (MRHSVLSISFAVALFLECYTPSTA). Residues Cys120 and Cys129 are joined by a disulfide bond.

The protein belongs to the melanin-concentrating hormone family. As to expression, pituitary gland. Produced in neurons of lateral basal hypothalamus which project both to the brain and to the neural lobe of the pituitary gland from where MCH is released.

In terms of biological role, plays a role in skin pigmentation by antagonizing the action of melanotropin alpha. Induces melanin concentration within the melanophores. May participate in the control of the hypothalamo-pituitary adrenal gland axis by inhibiting the release of ACTH. This chain is Pro-MCH 1 (mch1), found in Oncorhynchus mykiss (Rainbow trout).